Here is a 444-residue protein sequence, read N- to C-terminus: tRNA-2-methylthio-N(6)-dimethylallyladenosine synthase (444 aa).

An MTTase N-terminal domain is found at 4 to 120; the sequence is PTYYTITFGC…LGDLLAQVEA (117 aa). The [4Fe-4S] cluster site is built by Cys13, Cys49, Cys83, Cys155, Cys159, and Cys162. Positions 141–372 constitute a Radical SAM core domain; that stretch reads RDSQVTAWIN…RLVAEVAAAR (232 aa). The 65-residue stretch at 374–438 folds into the TRAM domain; the sequence is ARLLGQVQEV…AFSLTGEAVT (65 aa).

Belongs to the methylthiotransferase family. MiaB subfamily. As to quaternary structure, monomer. Requires [4Fe-4S] cluster as cofactor.

The protein resides in the cytoplasm. The enzyme catalyses N(6)-dimethylallyladenosine(37) in tRNA + (sulfur carrier)-SH + AH2 + 2 S-adenosyl-L-methionine = 2-methylsulfanyl-N(6)-dimethylallyladenosine(37) in tRNA + (sulfur carrier)-H + 5'-deoxyadenosine + L-methionine + A + S-adenosyl-L-homocysteine + 2 H(+). In terms of biological role, catalyzes the methylthiolation of N6-(dimethylallyl)adenosine (i(6)A), leading to the formation of 2-methylthio-N6-(dimethylallyl)adenosine (ms(2)i(6)A) at position 37 in tRNAs that read codons beginning with uridine. This Synechococcus sp. (strain JA-2-3B'a(2-13)) (Cyanobacteria bacterium Yellowstone B-Prime) protein is tRNA-2-methylthio-N(6)-dimethylallyladenosine synthase.